A 628-amino-acid polypeptide reads, in one-letter code: Phosphomethylpyrimidine synthase (628 aa).

Positions 1 to 14 (MTISDIGSQATTHT) are enriched in polar residues. Positions 1–37 (MTISDIGSQATTHTPVKASKADALKTPAHRSETDARF) are disordered. Positions 19-37 (SKADALKTPAHRSETDARF) are enriched in basic and acidic residues. Residues N260, M289, Y318, H354, 374–376 (SRG), 415–418 (DGLR), and E454 contribute to the substrate site. H458 contributes to the Zn(2+) binding site. Y481 is a substrate binding site. Zn(2+) is bound at residue H522. [4Fe-4S] cluster contacts are provided by C602, C605, and C610.

Belongs to the ThiC family. In terms of assembly, homodimer. [4Fe-4S] cluster is required as a cofactor.

The catalysed reaction is 5-amino-1-(5-phospho-beta-D-ribosyl)imidazole + S-adenosyl-L-methionine = 4-amino-2-methyl-5-(phosphooxymethyl)pyrimidine + CO + 5'-deoxyadenosine + formate + L-methionine + 3 H(+). It functions in the pathway cofactor biosynthesis; thiamine diphosphate biosynthesis. In terms of biological role, catalyzes the synthesis of the hydroxymethylpyrimidine phosphate (HMP-P) moiety of thiamine from aminoimidazole ribotide (AIR) in a radical S-adenosyl-L-methionine (SAM)-dependent reaction. This chain is Phosphomethylpyrimidine synthase, found in Psychrobacter cryohalolentis (strain ATCC BAA-1226 / DSM 17306 / VKM B-2378 / K5).